A 131-amino-acid chain; its full sequence is D-ribose pyranase (131 aa).

Residue His-20 is the Proton donor of the active site. Substrate is bound by residues Asp-28, His-98, and 120-122 (YAN).

This sequence belongs to the RbsD / FucU family. RbsD subfamily. As to quaternary structure, homodecamer.

The protein resides in the cytoplasm. The catalysed reaction is beta-D-ribopyranose = beta-D-ribofuranose. It functions in the pathway carbohydrate metabolism; D-ribose degradation; D-ribose 5-phosphate from beta-D-ribopyranose: step 1/2. Its function is as follows. Catalyzes the interconversion of beta-pyran and beta-furan forms of D-ribose. The sequence is that of D-ribose pyranase from Bacillus cereus (strain 03BB102).